The primary structure comprises 459 residues: Mycothione reductase (459 aa).

An FAD-binding site is contributed by 31–39 (EQGTFGGTC). Cysteines 39 and 44 form a disulfide. Catalysis depends on His-444, which acts as the Proton acceptor.

Belongs to the class-I pyridine nucleotide-disulfide oxidoreductase family. Homodimer. FAD serves as cofactor.

It carries out the reaction 2 mycothiol + NADP(+) = mycothione + NADPH + H(+). The enzyme catalyses 2 mycothiol + NAD(+) = mycothione + NADH + H(+). Catalyzes the NAD(P)H-dependent reduction of mycothione (the oxidized disulfide form of mycothiol) to mycothiol. In Mycobacterium tuberculosis (strain CDC 1551 / Oshkosh), this protein is Mycothione reductase (mtr).